The following is a 151-amino-acid chain: MRIWVDADACPGAIKEILFRAAQRTGVELTLVANHPIRVPPSPVIRSVQVAAGFDVADHEIVRRVAAGDLVITGDIPLAAEVIEAGAQALNPRGERYTPETIRERLNMRDFMDTLRASGVDTGGSAALSQRDRQAFANELDRILARRPSQG.

Belongs to the UPF0178 family.

This Halorhodospira halophila (strain DSM 244 / SL1) (Ectothiorhodospira halophila (strain DSM 244 / SL1)) protein is UPF0178 protein Hhal_1913.